Consider the following 301-residue polypeptide: MEKETKSLAWPATAEFYGWVFIFSSIQLCTMVLLTVRFNSFKVGREYAVFTFAGMSFNCFLLPIKMGLLSGHWSLPRDFCAILLYIDDFSIYFSSWSLVFMAIERINHFCYSTPLLNENSKALAKVCFPIVWIISGVQALQMLNNYKATALQNETPQCFLAFLRSGYDMWLMLVYSVMIPVMLVFIYIYSKNFMLLKDELSTVTTYLCIYLLLGTIAHLPKAGLSEIESDKIFYGLRDIFMALPVLKVYYIPVMAYCMACDDHTVPVRLCSIWLVNLCKKCFSCTRREKESDLEVGIKMLK.

The Extracellular segment spans residues 1–15; sequence MEKETKSLAWPATAE. The chain crosses the membrane as a helical span at residues 16–36; it reads FYGWVFIFSSIQLCTMVLLTV. Topologically, residues 37–48 are cytoplasmic; that stretch reads RFNSFKVGREYA. The helical transmembrane segment at 49 to 69 threads the bilayer; sequence VFTFAGMSFNCFLLPIKMGLL. Residues 70-82 are Extracellular-facing; it reads SGHWSLPRDFCAI. A helical transmembrane segment spans residues 83–103; that stretch reads LLYIDDFSIYFSSWSLVFMAI. Over 104 to 122 the chain is Cytoplasmic; the sequence is ERINHFCYSTPLLNENSKA. A helical transmembrane segment spans residues 123–143; the sequence is LAKVCFPIVWIISGVQALQML. Residues 144 to 168 lie on the Extracellular side of the membrane; sequence NNYKATALQNETPQCFLAFLRSGYD. Residues 169–189 form a helical membrane-spanning segment; that stretch reads MWLMLVYSVMIPVMLVFIYIY. Topologically, residues 190-199 are cytoplasmic; it reads SKNFMLLKDE. Residues 200-220 traverse the membrane as a helical segment; it reads LSTVTTYLCIYLLLGTIAHLP. At 221 to 238 the chain is on the extracellular side; sequence KAGLSEIESDKIFYGLRD. Residues 239–259 traverse the membrane as a helical segment; sequence IFMALPVLKVYYIPVMAYCMA. The Cytoplasmic segment spans residues 260–301; the sequence is CDDHTVPVRLCSIWLVNLCKKCFSCTRREKESDLEVGIKMLK.

The protein belongs to the G-protein coupled receptor 1 family.

The protein resides in the host cell membrane. This chain is G-protein coupled receptor homolog U51 (U51), found in Homo sapiens (Human).